Here is a 116-residue protein sequence, read N- to C-terminus: UPF0102 protein LA_2381 (116 aa).

It belongs to the UPF0102 family.

In Leptospira interrogans serogroup Icterohaemorrhagiae serovar Lai (strain 56601), this protein is UPF0102 protein LA_2381.